The sequence spans 558 residues: Membrane protein insertase YidC (558 aa).

Helical transmembrane passes span 3–23 (IKRTVLWVIFFMSAVMLFDNW), 364–384 (FVGNWGWAIVLLTLLIKAVFF), 438–458 (LPVVIQIPVFISLYWVLLASV), 477–497 (PYFILPVLMAVSMFVQTKLNP), and 508–528 (MMFMPIAFSVMFFFFPAGLVL).

This sequence belongs to the OXA1/ALB3/YidC family. Type 1 subfamily. As to quaternary structure, interacts with the Sec translocase complex via SecD. Specifically interacts with transmembrane segments of nascent integral membrane proteins during membrane integration.

Its subcellular location is the cell inner membrane. In terms of biological role, required for the insertion and/or proper folding and/or complex formation of integral membrane proteins into the membrane. Involved in integration of membrane proteins that insert both dependently and independently of the Sec translocase complex, as well as at least some lipoproteins. Aids folding of multispanning membrane proteins. The sequence is that of Membrane protein insertase YidC from Burkholderia pseudomallei (strain K96243).